Here is a 588-residue protein sequence, read N- to C-terminus: Protein disulfide-isomerase-like protein of the testis (588 aa).

The first 20 residues, 1–20 (MELLWTPLLLVAACLSEVLG), serve as a signal peptide directing secretion. Residues Asn55, Asn157, and Asn337 are each glycosylated (N-linked (GlcNAc...) asparagine). A Thioredoxin domain is found at 385 to 448 (PVKKLVGKNF…IAKIDITAND (64 aa)). Composition is skewed to basic and acidic residues over residues 531-542 (IEDTSKQDRPVK), 549-567 (SIRK…EREA), and 574-588 (EQPK…KEEL). Residues 531 to 588 (IEDTSKQDRPVKESPVLDSIRKPEEPERRKETAEREAAAAQPKEQPKPERKLEVKEEL) are disordered. A Prevents secretion from ER motif is present at residues 585-588 (KEEL).

Belongs to the protein disulfide isomerase family. As to quaternary structure, homodimer. The homodimer is not disulfide-linked. Interacts with CLGN and ERO1A. In terms of processing, N-glycosylated. As to expression, testis-specific (at protein level).

Its subcellular location is the endoplasmic reticulum. Its function is as follows. Probable redox-inactive chaperone involved in spermatogenesis. This Mus musculus (Mouse) protein is Protein disulfide-isomerase-like protein of the testis (Pdilt).